Here is a 256-residue protein sequence, read N- to C-terminus: Type III pantothenate kinase (256 aa).

Position 6–13 (6–13 (DVGNSNIV)) interacts with ATP. Residues Y100 and 107–110 (GADR) each bind substrate. The Proton acceptor role is filled by D109. D129 is a K(+) binding site. ATP is bound at residue T132. T184 serves as a coordination point for substrate.

Belongs to the type III pantothenate kinase family. As to quaternary structure, homodimer. Requires NH4(+) as cofactor. The cofactor is K(+).

It is found in the cytoplasm. The catalysed reaction is (R)-pantothenate + ATP = (R)-4'-phosphopantothenate + ADP + H(+). It participates in cofactor biosynthesis; coenzyme A biosynthesis; CoA from (R)-pantothenate: step 1/5. Catalyzes the phosphorylation of pantothenate (Pan), the first step in CoA biosynthesis. In Geotalea daltonii (strain DSM 22248 / JCM 15807 / FRC-32) (Geobacter daltonii), this protein is Type III pantothenate kinase.